The chain runs to 167 residues: Small ribosomal subunit protein uS9 (167 aa).

Disordered stretches follow at residues 1-45 and 137-167; these read MSEY…GGAT and KAGFLTRDPRATERKKAGLKKARKAPQFSKR. Residues 9 to 19 show a composition bias toward acidic residues; the sequence is DTVEDITESDE. A compositionally biased stretch (polar residues) spans 20-36; sequence FTGTYTSESSTPATGGN. Over residues 143–152 the composition is skewed to basic and acidic residues; sequence RDPRATERKK. Basic residues predominate over residues 153 to 167; sequence AGLKKARKAPQFSKR.

It belongs to the universal ribosomal protein uS9 family.

In Kineococcus radiotolerans (strain ATCC BAA-149 / DSM 14245 / SRS30216), this protein is Small ribosomal subunit protein uS9.